We begin with the raw amino-acid sequence, 138 residues long: Large ribosomal subunit protein uL16 (138 aa).

Basic residues predominate over residues 1–17 (MLIPRKVKHRKQHHPRQ). Positions 1-23 (MLIPRKVKHRKQHHPRQRGIASG) are disordered.

The protein belongs to the universal ribosomal protein uL16 family. Part of the 50S ribosomal subunit.

Its function is as follows. Binds 23S rRNA and is also seen to make contacts with the A and possibly P site tRNAs. In Mycobacterium sp. (strain JLS), this protein is Large ribosomal subunit protein uL16.